The sequence spans 533 residues: Probable ADP-ribosylation factor-binding protein C25H2.16c (533 aa).

Residues 15-151 (ATEPYAFEPD…LLSYKGYTFP (137 aa)) enclose the VHS domain. The GAT domain maps to 178–305 (REAMSAKLQE…LLTQYDHLLE (128 aa)). S320 is subject to Phosphoserine. A GAE domain is found at 417-532 (NNFTSTCAFE…EYTGQSSIRL (116 aa)).

The protein belongs to the GGA protein family.

The protein resides in the golgi apparatus. It localises to the trans-Golgi network. In terms of biological role, may play a role in the regulation of membrane traffic through the trans-Golgi network. The protein is Probable ADP-ribosylation factor-binding protein C25H2.16c of Schizosaccharomyces pombe (strain 972 / ATCC 24843) (Fission yeast).